Reading from the N-terminus, the 195-residue chain is dITP/XTP pyrophosphatase (195 aa).

Substrate is bound at residue 7-12 (SSNKGK). The Mg(2+) site is built by Glu38 and Asp68. The active-site Proton acceptor is Asp68. Residues Ser69, 150-153 (FGYD), Lys173, and 178-179 (HR) each bind substrate.

The protein belongs to the HAM1 NTPase family. In terms of assembly, homodimer. Mg(2+) serves as cofactor.

The catalysed reaction is XTP + H2O = XMP + diphosphate + H(+). It carries out the reaction dITP + H2O = dIMP + diphosphate + H(+). It catalyses the reaction ITP + H2O = IMP + diphosphate + H(+). Functionally, pyrophosphatase that catalyzes the hydrolysis of nucleoside triphosphates to their monophosphate derivatives, with a high preference for the non-canonical purine nucleotides XTP (xanthosine triphosphate), dITP (deoxyinosine triphosphate) and ITP. Seems to function as a house-cleaning enzyme that removes non-canonical purine nucleotides from the nucleotide pool, thus preventing their incorporation into DNA/RNA and avoiding chromosomal lesions. The polypeptide is dITP/XTP pyrophosphatase (Nautilia profundicola (strain ATCC BAA-1463 / DSM 18972 / AmH)).